A 262-amino-acid polypeptide reads, in one-letter code: Regulatory protein RecX (262 aa).

This sequence belongs to the RecX family.

Its subcellular location is the cytoplasm. Its function is as follows. Modulates RecA activity. This is Regulatory protein RecX from Photobacterium profundum (strain SS9).